Here is a 482-residue protein sequence, read N- to C-terminus: tRNA sulfurtransferase (482 aa).

Residues 61–165 (NQVLTAVTHT…NEKLNLVIAR (105 aa)) form the THUMP domain. ATP is bound by residues 183-184 (LI), K265, G287, and Q296. C344 and C456 are joined by a disulfide. Residues 404 to 482 (LGSDVVVLDI…GYKNVKVYRP (79 aa)) enclose the Rhodanese domain. Residue C456 is the Cysteine persulfide intermediate of the active site.

Belongs to the ThiI family.

The protein resides in the cytoplasm. It carries out the reaction [ThiI sulfur-carrier protein]-S-sulfanyl-L-cysteine + a uridine in tRNA + 2 reduced [2Fe-2S]-[ferredoxin] + ATP + H(+) = [ThiI sulfur-carrier protein]-L-cysteine + a 4-thiouridine in tRNA + 2 oxidized [2Fe-2S]-[ferredoxin] + AMP + diphosphate. It catalyses the reaction [ThiS sulfur-carrier protein]-C-terminal Gly-Gly-AMP + S-sulfanyl-L-cysteinyl-[cysteine desulfurase] + AH2 = [ThiS sulfur-carrier protein]-C-terminal-Gly-aminoethanethioate + L-cysteinyl-[cysteine desulfurase] + A + AMP + 2 H(+). It functions in the pathway cofactor biosynthesis; thiamine diphosphate biosynthesis. Catalyzes the ATP-dependent transfer of a sulfur to tRNA to produce 4-thiouridine in position 8 of tRNAs, which functions as a near-UV photosensor. Also catalyzes the transfer of sulfur to the sulfur carrier protein ThiS, forming ThiS-thiocarboxylate. This is a step in the synthesis of thiazole, in the thiamine biosynthesis pathway. The sulfur is donated as persulfide by IscS. This Aliivibrio salmonicida (strain LFI1238) (Vibrio salmonicida (strain LFI1238)) protein is tRNA sulfurtransferase.